Consider the following 811-residue polypeptide: Vacuolar protein sorting-associated protein 70 (811 aa).

Over residues 1-21 the composition is skewed to basic and acidic residues; sequence MRMIQRERKREKEEGQLKERT. A disordered region spans residues 1-63; sequence MRMIQRERKR…MNDSFTLTSR (63 aa). The N-linked (GlcNAc...) asparagine glycan is linked to Asn55. A helical transmembrane segment spans residues 90–110; it reads FMYLILASLLLYMGFVAAFAP. Asn237 carries an N-linked (GlcNAc...) asparagine glycan. The interval 334 to 367 is disordered; that stretch reads FSDTPGDPTTPGYPSKDSDTEHMSPVGRVPRIPS. A compositionally biased stretch (low complexity) spans 336–345; the sequence is DTPGDPTTPG. The Zn(2+) site is built by His445, Asp456, and Asp522. Asn568 and Asn599 each carry an N-linked (GlcNAc...) asparagine glycan. His607 provides a ligand contact to Zn(2+). The N-linked (GlcNAc...) asparagine glycan is linked to Asn670.

The protein belongs to the peptidase M28 family. M28B subfamily. It depends on Zn(2+) as a cofactor.

The protein localises to the membrane. Its function is as follows. Involved in vacuolar protein sorting. The sequence is that of Vacuolar protein sorting-associated protein 70 (VPS70) from Saccharomyces cerevisiae (strain ATCC 204508 / S288c) (Baker's yeast).